A 69-amino-acid chain; its full sequence is Ubiquitin-ribosomal protein eL40 fusion protein (69 aa).

One can recognise a Ubiquitin-like domain in the interval 1–17 (NIQKESTLHLVLRLRGG). A Glycyl lysine isopeptide (Lys-Gly) (interchain with G-Cter in ubiquitin) cross-link involves residue K4. G17 participates in a covalent cross-link: Glycyl lysine isopeptide (Gly-Lys) (interchain with K-? in acceptor proteins). N6,N6,N6-trimethyllysine is present on K39.

In the N-terminal section; belongs to the ubiquitin family. The protein in the C-terminal section; belongs to the eukaryotic ribosomal protein eL40 family. As to quaternary structure, part of the 60S ribosomal subunit. In terms of processing, trimethylation of Lys-39 ('Lys-22' of the mature chain) by SMYD5 promotes translation elongation and protein synthesis.

The protein resides in the cytoplasm. The protein localises to the nucleus. In terms of biological role, exists either covalently attached to another protein, or free (unanchored). When covalently bound, it is conjugated to target proteins via an isopeptide bond either as a monomer (monoubiquitin), a polymer linked via different Lys residues of the ubiquitin (polyubiquitin chains) or a linear polymer linked via the initiator Met of the ubiquitin (linear polyubiquitin chains). Polyubiquitin chains, when attached to a target protein, have different functions depending on the Lys residue of the ubiquitin that is linked: Lys-6-linked may be involved in DNA repair; Lys-11-linked is involved in ERAD (endoplasmic reticulum-associated degradation) and in cell-cycle regulation; Lys-29-linked is involved in proteotoxic stress response and cell cycle; Lys-33-linked is involved in kinase modification; Lys-48-linked is involved in protein degradation via the proteasome; Lys-63-linked is involved in endocytosis, DNA-damage responses as well as in signaling processes leading to activation of the transcription factor NF-kappa-B. Linear polymer chains formed via attachment by the initiator Met lead to cell signaling. Ubiquitin is usually conjugated to Lys residues of target proteins, however, in rare cases, conjugation to Cys or Ser residues has been observed. When polyubiquitin is free (unanchored-polyubiquitin), it also has distinct roles, such as in activation of protein kinases, and in signaling. Component of the 60S subunit of the ribosome. The sequence is that of Ubiquitin-ribosomal protein eL40 fusion protein (UBA52) from Gallus gallus (Chicken).